The primary structure comprises 123 residues: Fluoride-specific ion channel FluC (123 aa).

Transmembrane regions (helical) follow at residues 6–26 (VALVLIGGGTGAVARYYLSGV), 38–58 (LLVNSLASFLLGYLYGLIFWG), 68–88 (FLGTGFCGGLSTFSTFSYETF), and 100–120 (LLNIFANVLATIFLVFLGFVL). Na(+) contacts are provided by Gly75 and Ser78.

This sequence belongs to the fluoride channel Fluc/FEX (TC 1.A.43) family.

Its subcellular location is the cell membrane. It catalyses the reaction fluoride(in) = fluoride(out). With respect to regulation, na(+) is not transported, but it plays an essential structural role and its presence is essential for fluoride channel function. Its function is as follows. Fluoride-specific ion channel. Important for reducing fluoride concentration in the cell, thus reducing its toxicity. The polypeptide is Fluoride-specific ion channel FluC (Pyrococcus furiosus (strain ATCC 43587 / DSM 3638 / JCM 8422 / Vc1)).